Here is a 333-residue protein sequence, read N- to C-terminus: Anthranilate phosphoribosyltransferase (333 aa).

Residues glycine 78, glycine 81–aspartate 82, threonine 86, asparagine 88–threonine 91, lysine 106–serine 114, and serine 118 contribute to the 5-phospho-alpha-D-ribose 1-diphosphate site. Glycine 78 contributes to the anthranilate binding site. Mg(2+) is bound at residue serine 90. Asparagine 109 lines the anthranilate pocket. Anthranilate is bound at residue arginine 164. Mg(2+)-binding residues include aspartate 222 and glutamate 223.

The protein belongs to the anthranilate phosphoribosyltransferase family. In terms of assembly, homodimer. Requires Mg(2+) as cofactor.

The enzyme catalyses N-(5-phospho-beta-D-ribosyl)anthranilate + diphosphate = 5-phospho-alpha-D-ribose 1-diphosphate + anthranilate. The protein operates within amino-acid biosynthesis; L-tryptophan biosynthesis; L-tryptophan from chorismate: step 2/5. Its function is as follows. Catalyzes the transfer of the phosphoribosyl group of 5-phosphorylribose-1-pyrophosphate (PRPP) to anthranilate to yield N-(5'-phosphoribosyl)-anthranilate (PRA). This Natronomonas pharaonis (strain ATCC 35678 / DSM 2160 / CIP 103997 / JCM 8858 / NBRC 14720 / NCIMB 2260 / Gabara) (Halobacterium pharaonis) protein is Anthranilate phosphoribosyltransferase.